Here is a 165-residue protein sequence, read N- to C-terminus: Cyclic pyranopterin monophosphate synthase (165 aa).

Substrate is bound by residues 83-85 (FCH) and 120-121 (ME). The active site involves D135.

It belongs to the MoaC family. In terms of assembly, homohexamer; trimer of dimers.

It catalyses the reaction (8S)-3',8-cyclo-7,8-dihydroguanosine 5'-triphosphate = cyclic pyranopterin phosphate + diphosphate. The protein operates within cofactor biosynthesis; molybdopterin biosynthesis. Functionally, catalyzes the conversion of (8S)-3',8-cyclo-7,8-dihydroguanosine 5'-triphosphate to cyclic pyranopterin monophosphate (cPMP). This is Cyclic pyranopterin monophosphate synthase from Xanthomonas campestris pv. campestris (strain B100).